The sequence spans 245 residues: Uridylate kinase (245 aa).

Position 12–15 (12–15 (KLSG)) interacts with ATP. Residues 20 to 25 (GEKGVG) are involved in allosteric activation by GTP. Gly54 serves as a coordination point for UMP. Positions 55 and 59 each coordinate ATP. Residues Asp74 and 135 to 142 (IGSPYFST) contribute to the UMP site. ATP is bound by residues Asn163, Tyr169, and Asp172.

It belongs to the UMP kinase family. As to quaternary structure, homohexamer.

Its subcellular location is the cytoplasm. The enzyme catalyses UMP + ATP = UDP + ADP. The protein operates within pyrimidine metabolism; CTP biosynthesis via de novo pathway; UDP from UMP (UMPK route): step 1/1. Allosterically activated by GTP. Inhibited by UTP. Its function is as follows. Catalyzes the reversible phosphorylation of UMP to UDP. The sequence is that of Uridylate kinase from Streptococcus thermophilus (strain ATCC BAA-491 / LMD-9).